Here is a 3097-residue protein sequence, read N- to C-terminus: Neural-cadherin (3097 aa).

Positions 1-36 are cleaved as a signal peptide; it reads MAARRCLNQLRQRYITNRFNICTCAIFLISLPFILA. N-linked (GlcNAc...) asparagine glycosylation is found at Asn-97 and Asn-150. Positions 181-305 constitute a Cadherin 1 domain; sequence VRENQPAGTR…LDENDNRPIF (125 aa). N-linked (GlcNAc...) asparagine glycans are attached at residues Asn-325 and Asn-426. Cadherin domains are found at residues 430 to 543, 554 to 651, 660 to 756, 766 to 858, 867 to 968, 978 to 1078, 1087 to 1183, 1193 to 1299, 1307 to 1414, 1423 to 1514, 1523 to 1630, 1639 to 1742, 1749 to 1861, 1870 to 1966, and 1974 to 2085; these read HREK…PPYF, VQLN…APQF, IPEN…APKF, VDED…EPKF, VDEN…KPVF, VEEG…PPLF, VKQD…PPVW, VKEN…IPLF, VLEG…PPYF, VDEN…PPVF, ITEE…APIF, VTEN…PPQF, TEVD…KPHF, VFED…APKF, and LPEH…QPGS. An N-linked (GlcNAc...) asparagine glycan is attached at Asn-930. Asn-1266 carries an N-linked (GlcNAc...) asparagine glycan. Disulfide bonds link Cys-2346-Cys-2357, Cys-2351-Cys-2366, Cys-2368-Cys-2377, Cys-2559-Cys-2585, Cys-2592-Cys-2607, Cys-2601-Cys-2616, Cys-2618-Cys-2627, Cys-2787-Cys-2822, Cys-2869-Cys-2880, Cys-2874-Cys-2891, and Cys-2893-Cys-2902. In terms of domain architecture, EGF-like 1 spans 2346–2377; the sequence is CRTTPCHNGGRCVDTRFGPHCSCPVGYTGPRC. Residues 2379-2585 form the Laminin G-like 1 domain; it reads QTTRSFRGNG…GLSRNSVAGC (207 aa). In terms of domain architecture, EGF-like 2 spans 2592–2627; that stretch reads CAQTETTARCWEHGNCVGSLSEARCHCRPGWTGPAC. The region spanning 2631 to 2822 is the Laminin G-like 2 domain; it reads TIPTTFKAQS…TMARNLEKGC (192 aa). The region spanning 2869–2902 is the EGF-like 3 domain; the sequence is CLDMPCMNGATCINLEPRLRYRCICPDGFWGENC. Residues 2917–2937 traverse the membrane as a helical segment; sequence ALAAILVCLLIILILVLVFVV. The Cytoplasmic portion of the chain corresponds to 2938-3097; sequence YNRRREAHIK…PNPHNTELEL (160 aa).

In terms of tissue distribution, in the embryo, the protein first appears in the mesoderm at stage 9 and is present in the myoblasts and muscle fibers by stage 12 and stage 14, respectively. At stage 12 the protein is also located in the axons of the entire CNS, but not in the glial cells. In third instar larvae protein is expressed in the CNS neuropile, photoreceptor axons and precursors of adult muscles.

It localises to the cell membrane. Its function is as follows. Cadherins are calcium-dependent cell adhesion proteins. They preferentially interact with themselves in a homophilic manner in connecting cells; cadherins may thus contribute to the sorting of heterogeneous cell types. May associate with arm neural isoform and participate in the transmission of developmental information. The chain is Neural-cadherin (CadN) from Drosophila melanogaster (Fruit fly).